The primary structure comprises 460 residues: 3'3'-cGAMP-specific phosphodiesterase 3 (460 aa).

The 162-residue stretch at 28–189 (PPEHCIRCCW…IPLFSRIALL (162 aa)) folds into the HD domain. The HD-GYP domain occupies 260–455 (DDAYLECIVT…LPDEYTQLPH (196 aa)). His-317 and Asp-318 together coordinate a divalent metal cation. Catalysis depends on Lys-321, which acts as the Proton donor. A divalent metal cation is bound by residues His-346, His-370, His-371, and Asp-399.

As to quaternary structure, monomer. Requires Mn(2+) as cofactor.

It catalyses the reaction 3',3'-cGAMP + H2O = 5'-pApG-3' + H(+). In terms of biological role, phosphodiesterase (PDE) that catalyzes the hydrolysis of 3'3'-cyclic GMP-AMP (3'3'-cGAMP), leading to linear 5'-pApG. Counteracts the function of the 3'3'-cGAMP synthase DncV, and is involved in the modulation of intracellular 3'3'-cGAMP levels. Enhances bacterial chemotaxis and inhibits intestinal colonization in vivo. Thus exerts a crucial role in regulating bacterial infectivity through catalyzing 3'3'-cGAMP degradation. Is specific for 3'3'-cGAMP since it cannot degrade other cGAMP linkage isomers (3'2'-, 2'3'-, and 2'2'-cGAMPs); is also able to hydrolyze c-di-GMP but not c-di-AMP. The sequence is that of 3'3'-cGAMP-specific phosphodiesterase 3 from Vibrio cholerae serotype O1 (strain ATCC 39315 / El Tor Inaba N16961).